A 218-amino-acid polypeptide reads, in one-letter code: Large ribosomal subunit protein uL3 (218 aa).

A disordered region spans residues 126–163 (HGFSRGPMTHGSKNHRQPGSIGAGTTPGRIYPGKRMSG).

It belongs to the universal ribosomal protein uL3 family. As to quaternary structure, part of the 50S ribosomal subunit. Forms a cluster with proteins L14 and L19.

Functionally, one of the primary rRNA binding proteins, it binds directly near the 3'-end of the 23S rRNA, where it nucleates assembly of the 50S subunit. The chain is Large ribosomal subunit protein uL3 from Synechococcus sp. (strain CC9311).